A 132-amino-acid chain; its full sequence is Hemoglobin subunit beta-1 (132 aa).

The Globin domain occupies 1 to 132 (WSKIDIDVCG…VVSALGRQYH (132 aa)). Heme b is bound by residues histidine 49 and histidine 78.

It belongs to the globin family. Hb 1 is a heterotetramer of two alpha-1 and two beta-1 chains. Hb 2 is a heterotetramer of two alpha-2 and two beta-1 chains. Red blood cells.

Its function is as follows. Involved in oxygen transport from gills to the various peripheral tissues. In Arctogadus glacialis (Arctic cod), this protein is Hemoglobin subunit beta-1 (hbb1).